A 598-amino-acid chain; its full sequence is Pantothenate kinase 1 (598 aa).

Residues 32–161 are disordered; it reads ARPGDQGKAG…SPGAPVGTSA (130 aa). Residues 38–49 are compositionally biased toward gly residues; it reads GKAGGGSPGWGC. Residue Ser-215 is modified to Phosphoserine. Positions 218-235 match the Nucleolar localization signal motif; the sequence is KKCRLRRRMDSGRKNRPP. Glu-363 (proton acceptor) is an active-site residue. Residues Ser-417, Ser-420, and Arg-432 each contribute to the acetyl-CoA site.

This sequence belongs to the type II pantothenate kinase family. As to quaternary structure, homodimer. In terms of tissue distribution, expressed at high levels in brain, heart, kidney, liver, skeletal muscle and testis. As to expression, detected at much lower levels in kidney, liver, brain and testis and not detected in heart or skeletal muscle.

The protein localises to the cytoplasm. It is found in the nucleus. The protein resides in the nucleolus. It localises to the cytosol. Its subcellular location is the cytoplasmic vesicle. The protein localises to the clathrin-coated vesicle. It is found in the recycling endosome. The catalysed reaction is (R)-pantothenate + ATP = (R)-4'-phosphopantothenate + ADP + H(+). It functions in the pathway cofactor biosynthesis; coenzyme A biosynthesis; CoA from (R)-pantothenate: step 1/5. With respect to regulation, regulated by feedback inhibition by CoA and its thioesters. Functionally, catalyzes the phosphorylation of pantothenate to generate 4'-phosphopantothenate in the first and rate-determining step of coenzyme A (CoA) synthesis. The protein is Pantothenate kinase 1 (PANK1) of Homo sapiens (Human).